We begin with the raw amino-acid sequence, 93 residues long: Acylphosphatase (93 aa).

The 89-residue stretch at 5-93 (CIIAWVHGRV…EELTGFRIRY (89 aa)) folds into the Acylphosphatase-like domain. Residues Arg-20 and Asn-38 contribute to the active site.

Belongs to the acylphosphatase family.

The catalysed reaction is an acyl phosphate + H2O = a carboxylate + phosphate + H(+). The sequence is that of Acylphosphatase (acyP) from Citrobacter koseri (strain ATCC BAA-895 / CDC 4225-83 / SGSC4696).